We begin with the raw amino-acid sequence, 274 residues long: Diaminopimelate epimerase (274 aa).

Residues Asn11, Gln44, and Asn64 each contribute to the substrate site. The active-site Proton donor is the Cys73. Substrate contacts are provided by residues 74 to 75 (GN), Asn157, Asn190, and 208 to 209 (ER). Cys217 (proton acceptor) is an active-site residue. 218–219 (GS) provides a ligand contact to substrate.

Belongs to the diaminopimelate epimerase family. As to quaternary structure, homodimer.

It localises to the cytoplasm. The catalysed reaction is (2S,6S)-2,6-diaminopimelate = meso-2,6-diaminopimelate. It functions in the pathway amino-acid biosynthesis; L-lysine biosynthesis via DAP pathway; DL-2,6-diaminopimelate from LL-2,6-diaminopimelate: step 1/1. Its function is as follows. Catalyzes the stereoinversion of LL-2,6-diaminopimelate (L,L-DAP) to meso-diaminopimelate (meso-DAP), a precursor of L-lysine and an essential component of the bacterial peptidoglycan. This chain is Diaminopimelate epimerase, found in Escherichia coli O127:H6 (strain E2348/69 / EPEC).